A 122-amino-acid chain; its full sequence is Large ribosomal subunit protein uL14 (122 aa).

Belongs to the universal ribosomal protein uL14 family. In terms of assembly, part of the 50S ribosomal subunit. Forms a cluster with proteins L3 and L19. In the 70S ribosome, L14 and L19 interact and together make contacts with the 16S rRNA in bridges B5 and B8.

Its function is as follows. Binds to 23S rRNA. Forms part of two intersubunit bridges in the 70S ribosome. In Exiguobacterium sibiricum (strain DSM 17290 / CCUG 55495 / CIP 109462 / JCM 13490 / 255-15), this protein is Large ribosomal subunit protein uL14.